The sequence spans 466 residues: Uronate isomerase (466 aa).

The protein belongs to the metallo-dependent hydrolases superfamily. Uronate isomerase family.

It carries out the reaction D-glucuronate = D-fructuronate. It catalyses the reaction aldehydo-D-galacturonate = keto-D-tagaturonate. Its pathway is carbohydrate metabolism; pentose and glucuronate interconversion. The chain is Uronate isomerase (uxaC) from Brucella melitensis biotype 1 (strain ATCC 23456 / CCUG 17765 / NCTC 10094 / 16M).